The sequence spans 1008 residues: Retinoblastoma-related protein (1008 aa).

The tract at residues 375–394 (KRKVDSMTSPTKTITSPLSP) is disordered. The span at 380–392 (SMTSPTKTITSPL) shows a compositional bias: polar residues. Residues 404–605 (TPVSTAMTTA…EKGSSMYNSL (202 aa)) are domain A. Positions 404–853 (TPVSTAMTTA…NEVFIPSVKP (450 aa)) are pocket. Positions 606 to 722 (TIARPNLSNE…HPTRGETCGE (117 aa)) are spacer. The segment at 723–853 (TAVNLFFSKI…NEVFIPSVKP (131 aa)) is domain B. 2 disordered regions span residues 865–899 (KNPN…SLPD) and 988–1008 (LQNG…LKTE).

The protein belongs to the retinoblastoma protein (RB) family.

The protein localises to the nucleus. In terms of biological role, regulator of biological processes that recruits a histone deacetylase to control gene transcription. May play a role in the entry into mitosis, negatively regulating the cell proliferation. Formation of stable complexes with geminiviridae replication-associated proteins may create a cellular environment which favors viral DNA replication. This chain is Retinoblastoma-related protein (RBR), found in Pilosella officinarum (Mouse-ear hawkweed).